Here is a 465-residue protein sequence, read N- to C-terminus: MELAAEEGFDIEDVEGAIEEAGHGPLPVLAVVGRPNVGKSTLVNRIIGRREAVVEDKPGVTRDRVTYEAEWAGRRFKVVDTGGWEQDVLGIDASVAAQAEYAIEAADAVVFVVDAKVGATDTDEAVVRLLRKAGKPVVLCANKVDGPSGEADASYLWSLGLGEPQPVSALHGRGTGDMLDRVLEALPEAPAQTFGTAVGGPRRIALIGRPNVGKSSLLNKVAGEDRVVVNELAGTTRDPVDELIELGGVTWKFVDTAGIRKRVHLQQGADYYASLRTAAAVEKAEVAVILVDASESISVQDQRIVTMAVEAGRAIVVAYNKWDTLDEERRYYLEREIETELGQVAWAPRVNVSAQTGRHMEKLVPAIETALAGWETRVPTGRLNAFLGELAAAHPHPVRGGKQPRILFGTQAGTKPPRFVLFASGFIEAGYRRFIERRLREEFGFEGTPIHISVRVREKRGAKKK.

2 consecutive EngA-type G domains span residues 27–190 and 202–375; these read PVLA…PEAP and RRIA…AGWE. GTP is bound by residues 33–40, 80–84, 142–145, 208–215, 255–259, and 320–323; these read GRPNVGKS, DTGGW, NKVD, DTAGI, and NKWD. One can recognise a KH-like domain in the interval 376 to 458; that stretch reads TRVPTGRLNA…PIHISVRVRE (83 aa).

It belongs to the TRAFAC class TrmE-Era-EngA-EngB-Septin-like GTPase superfamily. EngA (Der) GTPase family. In terms of assembly, associates with the 50S ribosomal subunit.

GTPase that plays an essential role in the late steps of ribosome biogenesis. This chain is GTPase Der, found in Streptomyces coelicolor (strain ATCC BAA-471 / A3(2) / M145).